A 127-amino-acid chain; its full sequence is NADPH-dependent 7-cyano-7-deazaguanine reductase (127 aa).

The Thioimide intermediate role is filled by Cys-40. The Proton donor role is filled by Asp-47. Substrate contacts are provided by residues 62–64 (VEL) and 81–82 (HE).

It belongs to the GTP cyclohydrolase I family. QueF type 1 subfamily.

It localises to the cytoplasm. It catalyses the reaction 7-aminomethyl-7-carbaguanine + 2 NADP(+) = 7-cyano-7-deazaguanine + 2 NADPH + 3 H(+). Its pathway is tRNA modification; tRNA-queuosine biosynthesis. Its function is as follows. Catalyzes the NADPH-dependent reduction of 7-cyano-7-deazaguanine (preQ0) to 7-aminomethyl-7-deazaguanine (preQ1). The polypeptide is NADPH-dependent 7-cyano-7-deazaguanine reductase (Campylobacter lari (strain RM2100 / D67 / ATCC BAA-1060)).